The chain runs to 669 residues: Myb-like protein M (669 aa).

Positions 27–69 (DPSLMDDEFSDNEYDLSPKDDVPSPSKRGRGQIQNGIRRSPNK) are disordered. Over residues 30–40 (LMDDEFSDNEY) the composition is skewed to acidic residues. HTH myb-type domains lie at 60-118 (QNGI…SPDI) and 119-170 (RKGP…SREV). DNA-binding regions (H-T-H motif) lie at residues 90-114 (WKRI…KRVL) and 142-166 (WKKI…KSLQ). Positions 172-223 (WVPKEDEVLVKKVDEMGENLSWLEVSEYLAKLKHTNTLRTALECKTRYLQLT) constitute a Myb-like domain. 2 disordered regions span residues 226 to 530 (GGSI…EDNG) and 550 to 636 (IKNK…PHQS). 3 stretches are compositionally biased toward low complexity: residues 234-382 (NQSN…SSPS), 389-415 (NNNN…NSNN), and 450-464 (PTSL…SSPS). The span at 465–482 (CNNSIRQPSPSPSIKTFK) shows a compositional bias: polar residues. Composition is skewed to low complexity over residues 483-521 (STIV…NNDN), 555-593 (NNNN…NSDN), and 611-636 (SNFK…PHQS).

Its subcellular location is the nucleus. This is Myb-like protein M (mybM) from Dictyostelium discoideum (Social amoeba).